The following is a 568-amino-acid chain: Proline--tRNA ligase (568 aa).

The protein belongs to the class-II aminoacyl-tRNA synthetase family. ProS type 1 subfamily. In terms of assembly, homodimer.

Its subcellular location is the cytoplasm. The catalysed reaction is tRNA(Pro) + L-proline + ATP = L-prolyl-tRNA(Pro) + AMP + diphosphate. Functionally, catalyzes the attachment of proline to tRNA(Pro) in a two-step reaction: proline is first activated by ATP to form Pro-AMP and then transferred to the acceptor end of tRNA(Pro). As ProRS can inadvertently accommodate and process non-cognate amino acids such as alanine and cysteine, to avoid such errors it has two additional distinct editing activities against alanine. One activity is designated as 'pretransfer' editing and involves the tRNA(Pro)-independent hydrolysis of activated Ala-AMP. The other activity is designated 'posttransfer' editing and involves deacylation of mischarged Ala-tRNA(Pro). The misacylated Cys-tRNA(Pro) is not edited by ProRS. The protein is Proline--tRNA ligase of Listeria monocytogenes serotype 4b (strain F2365).